Reading from the N-terminus, the 707-residue chain is Coiled-coil domain-containing protein 177 (707 aa).

2 disordered regions span residues 1–65 (MVDP…EGGR) and 183–294 (PSAG…SALT). 3 stretches are compositionally biased toward low complexity: residues 38 to 49 (AASSASASASAA), 183 to 215 (PSAGSSSSCSSASLPASPAPRAARKASPSPSSA), and 243 to 258 (ALSSESGASSSSYSGE). Ser311 is modified (phosphoserine). Residues 364–605 (GQWELQRVHA…LQHATQVAEE (242 aa)) are a coiled coil. Disordered stretches follow at residues 372–426 (HAKQ…RSEE), 454–581 (KLQQ…EREH), 597–637 (QHAT…RDED), and 652–707 (ERSE…LDRK). 7 stretches are compositionally biased toward basic and acidic residues: residues 377–392 (REREEREKQRALEQGR), 399–426 (VEERRGRRGREEREAARRRQRQYERSEE), 454–484 (KLQQEQNLKQREEGLQEGRERAEQIRRERAQ), 491–514 (QRQEGQLQREKRELSRAERARHEA), 543–581 (ENYEHLVEQRTRELRERARREELQGRRAKEAAERKEREH), 618–637 (RLEKERAQRANKEKVERDED), and 652–664 (ERSEQLTRERRSA). A compositionally biased stretch (low complexity) spans 665-675 (LESARSTARAS). Over residues 677–707 (HVREKVREETNTRSFDRMVREAQLHASLDRK) the composition is skewed to basic and acidic residues.

The polypeptide is Coiled-coil domain-containing protein 177 (CCDC177) (Homo sapiens (Human)).